Here is a 243-residue protein sequence, read N- to C-terminus: Small ribosomal subunit protein uS3 (243 aa).

A KH type-2 domain is found at 39-110 (IRKFIHKKYG…QVRINVVEVE (72 aa)). Positions 217–243 (QQLPVGATPRRRAGRRPQQFEDRSNEG) are disordered. Residues 234–243 (QQFEDRSNEG) show a composition bias toward basic and acidic residues.

This sequence belongs to the universal ribosomal protein uS3 family. As to quaternary structure, part of the 30S ribosomal subunit. Forms a tight complex with proteins S10 and S14.

Its function is as follows. Binds the lower part of the 30S subunit head. Binds mRNA in the 70S ribosome, positioning it for translation. This Synechococcus sp. (strain WH7803) protein is Small ribosomal subunit protein uS3.